A 260-amino-acid polypeptide reads, in one-letter code: MAMPDFTMRQLLEAGVHFGHHTRRWNPRMAPFLFGVRNQVHIIDLQQTVPMLDRALKAIRDTVAGGGRVLFVGTKRAAADQIAEAAKRSGQYYVNHRWLGGMLTNWKTITGSIKRLRQIDDMLTGDTHGLTKKEILDITRNREKLERSLGGIKEMGGLPDILFVIDTNKEKLAVEEANKLGIPVVAILDSNSDPRGVTFPIPGNDDAIRAIALYCELVSGAVLDGISAELGASGQDFGAAEELPVDTAAEAAAAEAAPAA.

It belongs to the universal ribosomal protein uS2 family.

The protein is Small ribosomal subunit protein uS2 of Gluconacetobacter diazotrophicus (strain ATCC 49037 / DSM 5601 / CCUG 37298 / CIP 103539 / LMG 7603 / PAl5).